Consider the following 218-residue polypeptide: MGQKINPLGFRLGTTQSHHSLWFAQPKKYSEGLQEDKKIRDCIKNYVQKNTRLSSGVEGIARIEIQKRLDLIQVIIYMGFPKLLIEDKPRKLEELQMNVQKELNCMNRKLNIAITRIGNPYGHPNILAEFIAGQLKNRVSFRKAMKKAIELTEQADTKGIQIQIAGRIDGKEIARVEWIREGRVPLQTIGAKIEYCSYRVRTIYGVLGIKIWIFIDEE.

The KH type-2 domain maps to 43–118; it reads IKNYVQKNTR…KLNIAITRIG (76 aa).

It belongs to the universal ribosomal protein uS3 family. In terms of assembly, part of the 30S ribosomal subunit.

Its subcellular location is the plastid. It is found in the chloroplast. The chain is Small ribosomal subunit protein uS3c (rps3) from Gossypium barbadense (Sea Island cotton).